The chain runs to 251 residues: Flagellar L-ring protein (251 aa).

An N-terminal signal peptide occupies residues M1–A17. C18 carries N-palmitoyl cysteine lipidation. C18 carries S-diacylglycerol cysteine lipidation.

This sequence belongs to the FlgH family. The basal body constitutes a major portion of the flagellar organelle and consists of four rings (L,P,S, and M) mounted on a central rod.

It is found in the cell outer membrane. The protein resides in the bacterial flagellum basal body. Assembles around the rod to form the L-ring and probably protects the motor/basal body from shearing forces during rotation. In Maricaulis maris (strain MCS10) (Caulobacter maris), this protein is Flagellar L-ring protein.